The primary structure comprises 466 residues: Uridine kinase-like protein 3 (466 aa).

The interval 41-246 (HGQPFVIGVA…IVQHIHTKLG (206 aa)) is uridine kinase. The segment at 256 to 466 (NLYVIQSTFQ…GDRYFGTDDE (211 aa)) is uracil phosphoribosyltransferase. GTP is bound by residues Lys280, Arg289, and 323 to 326 (CKKL). Arg333 and Arg358 together coordinate 5-phospho-alpha-D-ribose 1-diphosphate. Arg378 is a GTP binding site. 5-phospho-alpha-D-ribose 1-diphosphate-binding positions include Asp384, 389–392 (TGNS), and Glu455. Position 454–456 (454–456 (GEF)) interacts with uracil.

This sequence in the N-terminal section; belongs to the uridine kinase family. The protein in the C-terminal section; belongs to the UPRTase family. Requires Mg(2+) as cofactor.

The catalysed reaction is UMP + diphosphate = 5-phospho-alpha-D-ribose 1-diphosphate + uracil. It catalyses the reaction cytidine + ATP = CMP + ADP + H(+). It carries out the reaction uridine + ATP = UMP + ADP + H(+). It functions in the pathway pyrimidine metabolism; UMP biosynthesis via salvage pathway; UMP from uracil: step 1/1. The protein operates within pyrimidine metabolism; CTP biosynthesis via salvage pathway; CTP from cytidine: step 1/3. Its pathway is pyrimidine metabolism; UMP biosynthesis via salvage pathway; UMP from uridine: step 1/1. Its activity is regulated as follows. Allosterically activated by GTP. In terms of biological role, involved in the pyrimidine salvage pathway. The uracil phosphoribosyltransferase (UPRT) activity, that catalyzes the conversion of uracil and 5-phospho-alpha-D-ribose 1-diphosphate (PRPP) to UMP and diphosphate, is unsure. The chain is Uridine kinase-like protein 3 (UKL3) from Arabidopsis thaliana (Mouse-ear cress).